A 72-amino-acid chain; its full sequence is Large ribosomal subunit protein bL31 (72 aa).

Residues Cys-16, Cys-18, Cys-37, and Cys-40 each coordinate Zn(2+).

This sequence belongs to the bacterial ribosomal protein bL31 family. Type A subfamily. Part of the 50S ribosomal subunit. The cofactor is Zn(2+).

In terms of biological role, binds the 23S rRNA. In Idiomarina loihiensis (strain ATCC BAA-735 / DSM 15497 / L2-TR), this protein is Large ribosomal subunit protein bL31.